The chain runs to 334 residues: Pantothenate synthetase (334 aa).

ATP is bound at residue 34–41 (MGALHEGH). H41 acts as the Proton donor in catalysis. Q71 provides a ligand contact to (R)-pantoate. Q71 contributes to the beta-alanine binding site. 158–161 (GQKD) is an ATP binding site. Q164 is a (R)-pantoate binding site. ATP-binding positions include V187 and 195-198 (LSSR). The disordered stretch occupies residues 288–334 (PLMLGTRGPAGEASPPNRERSEPGSAEQNKSPGEARTTPSGTSEASE). The segment covering 313 to 334 (AEQNKSPGEARTTPSGTSEASE) has biased composition (polar residues).

It belongs to the pantothenate synthetase family. Homodimer.

It is found in the cytoplasm. The enzyme catalyses (R)-pantoate + beta-alanine + ATP = (R)-pantothenate + AMP + diphosphate + H(+). It functions in the pathway cofactor biosynthesis; (R)-pantothenate biosynthesis; (R)-pantothenate from (R)-pantoate and beta-alanine: step 1/1. Functionally, catalyzes the condensation of pantoate with beta-alanine in an ATP-dependent reaction via a pantoyl-adenylate intermediate. This is Pantothenate synthetase from Nocardioides sp. (strain ATCC BAA-499 / JS614).